Consider the following 616-residue polypeptide: Dihydroxy-acid dehydratase (616 aa).

Mg(2+) is bound at residue Asp-81. A [2Fe-2S] cluster-binding site is contributed by Cys-122. 2 residues coordinate Mg(2+): Asp-123 and Lys-124. Lys-124 bears the N6-carboxylysine mark. Cys-195 lines the [2Fe-2S] cluster pocket. Position 491 (Glu-491) interacts with Mg(2+). Residue Ser-517 is the Proton acceptor of the active site.

The protein belongs to the IlvD/Edd family. Homodimer. [2Fe-2S] cluster serves as cofactor. It depends on Mg(2+) as a cofactor.

The enzyme catalyses (2R)-2,3-dihydroxy-3-methylbutanoate = 3-methyl-2-oxobutanoate + H2O. The catalysed reaction is (2R,3R)-2,3-dihydroxy-3-methylpentanoate = (S)-3-methyl-2-oxopentanoate + H2O. It functions in the pathway amino-acid biosynthesis; L-isoleucine biosynthesis; L-isoleucine from 2-oxobutanoate: step 3/4. Its pathway is amino-acid biosynthesis; L-valine biosynthesis; L-valine from pyruvate: step 3/4. Functions in the biosynthesis of branched-chain amino acids. Catalyzes the dehydration of (2R,3R)-2,3-dihydroxy-3-methylpentanoate (2,3-dihydroxy-3-methylvalerate) into 2-oxo-3-methylpentanoate (2-oxo-3-methylvalerate) and of (2R)-2,3-dihydroxy-3-methylbutanoate (2,3-dihydroxyisovalerate) into 2-oxo-3-methylbutanoate (2-oxoisovalerate), the penultimate precursor to L-isoleucine and L-valine, respectively. The chain is Dihydroxy-acid dehydratase from Erwinia tasmaniensis (strain DSM 17950 / CFBP 7177 / CIP 109463 / NCPPB 4357 / Et1/99).